A 1029-amino-acid polypeptide reads, in one-letter code: MGLWGKKGTVAPHDQSPRRRPKKGLIKKKMVKREKQKRNMEELKKEVVMDDHKLTLEELSTKYSVDLTKGHSHQRAKEILTRGGPNTVTPPPTTPEWVKFCKQLFGGFSLLLWTGAILCFVAYSIQIYFNEEPTKDNLYLSIVLSVVVIVTGCFSYYQEAKSSKIMESFKNMVPQQALVIRGGEKMQINVQEVVLGDLVEIKGGDRVPADLRLISAQGCKVDNSSLTGESEPQSRSPDFTHENPLETRNICFFSTNCVEGTARGIVIATGDSTVMGRIASLTSGLAVGQTPIAAEIEHFIHLITVVAVFLGVTFFALSLLLGYGWLEAIIFLIGIIVANVPEGLLATVTVCLTLTAKRMARKNCLVKNLEAVETLGSTSTICSDKTGTLTQNRMTVAHMWFDMTVYEADTTEEQTGKTFTKSSDTWFMLARIAGLCNRADFKANQEILPIAKRATTGDASESALLKFIEQSYSSVAEMREKNPKVAEIPFNSTNKYQMSIHLREDSSQTHVLMMKGAPERILEFCSTFLLNGQEYSMNDEMKEAFQNAYLELGGLGERVLGFCFLNLPSSFSKGFPFNTDEINFPMDNLCFVGLISMIDPPRAAVPDAVSKCRSAGIKVIMVTGDHPITAKAIAKGVGIISEGTETAEEVAARLKIPISKVDASAAKAIVVHGAELKDIQSKQLDQILQNHPEIVFARTSPQQKLIIVEGCQRLGAVVAVTGDGVNDSPALKKADIGIAMGISGSDVSKQAADMILLDDNFASIVTGVEEGRLIFDNLKKSIMYTLTSNIPEITPFLMFIILGIPLPLGTITILCIDLGTDMVPAISLAYESAESDIMKRLPRNPKTDNLVNHRLIGMAYGQIGMIQALAGFFTYFVILAENGFRPVDLLGIRLHWEDKYLNDLEDSYGQQWTYEQRKVVEFTCQTAFFVTIVVVQWADLIISKTRRNSLFQQGMRNKVLIFGILEETLLAAFLSYTPGMDVALRMYPLKITWWLCAIPYSILIFVYDEIRKLLIRQHPDGWVERETYY.

The disordered stretch occupies residues M1 to K37. At M1–P95 the chain is on the cytoplasmic side. Over residues R18–Q36 the composition is skewed to basic residues. Residues P90–P92 are interaction with phosphoinositide-3 kinase. A helical membrane pass occupies residues E96–A116. The Extracellular portion of the chain corresponds to I117–Y139. Residues L140 to A160 traverse the membrane as a helical segment. Over K161 to I296 the chain is Cytoplasmic. Over residues N223–P237 the composition is skewed to polar residues. The segment at N223–E242 is disordered. The chain crosses the membrane as a helical span at residues E297–A316. Over L317 to A328 the chain is Extracellular. A helical transmembrane segment spans residues I329–A346. Topologically, residues T347–L778 are cytoplasmic. Residue D384 is the 4-aspartylphosphate intermediate of the active site. Mg(2+) is bound by residues D723 and D727. A helical membrane pass occupies residues K779–M798. Topologically, residues F799–L808 are extracellular. The chain crosses the membrane as a helical span at residues G809–A829. Residues Y830 to N849 are Cytoplasmic-facing. A helical transmembrane segment spans residues L850 to F872. Residues F873 to C924 lie on the Extracellular side of the membrane. The helical transmembrane segment at Q925 to K944 threads the bilayer. The Cytoplasmic portion of the chain corresponds to T945–N957. The residue at position 949 (S949) is a Phosphoserine; by PKA. A helical transmembrane segment spans residues K958 to Y976. Over T977–I991 the chain is Extracellular. A helical membrane pass occupies residues T992–K1012. The Cytoplasmic segment spans residues L1013–Y1029.

This sequence belongs to the cation transport ATPase (P-type) (TC 3.A.3) family. Type IIC subfamily. As to quaternary structure, the sodium/potassium-transporting ATPase is composed of a catalytic alpha subunit, an auxiliary non-catalytic beta subunit and an additional regulatory subunit. In terms of tissue distribution, specifically expressed in testis. Found in very low levels in skeletal muscle. Expressed in mature sperm (at protein level).

It localises to the cell membrane. The enzyme catalyses K(+)(out) + Na(+)(in) + ATP + H2O = K(+)(in) + Na(+)(out) + ADP + phosphate + H(+). Its activity is regulated as follows. Specifically inhibited by an endogenous cardiac glycoside, ouabain. This is the catalytic component of the active enzyme, which catalyzes the hydrolysis of ATP coupled with the exchange of sodium and potassium ions across the plasma membrane. This action creates the electrochemical gradient of sodium and potassium ions, providing the energy for active transport of various nutrients. Plays a role in sperm motility. The protein is Sodium/potassium-transporting ATPase subunit alpha-4 of Homo sapiens (Human).